We begin with the raw amino-acid sequence, 267 residues long: Putative F-box protein At5g38810 (267 aa).

One can recognise an F-box domain in the interval 4 to 53 (RKTFDSIPDDLFVEIALRLSSKSIARCRCVSKLWASILYRQDFTELFITK).

The polypeptide is Putative F-box protein At5g38810 (Arabidopsis thaliana (Mouse-ear cress)).